Consider the following 161-residue polypeptide: Nucleotide-binding protein LHK_01423 (161 aa).

The protein belongs to the YajQ family.

In terms of biological role, nucleotide-binding protein. This Laribacter hongkongensis (strain HLHK9) protein is Nucleotide-binding protein LHK_01423.